The primary structure comprises 480 residues: ATP synthase subunit beta 1 (480 aa).

G154–T161 is a binding site for ATP.

It belongs to the ATPase alpha/beta chains family. F-type ATPases have 2 components, CF(1) - the catalytic core - and CF(0) - the membrane proton channel. CF(1) has five subunits: alpha(3), beta(3), gamma(1), delta(1), epsilon(1). CF(0) has four main subunits: a(1), b(1), b'(1) and c(9-12).

It is found in the cell inner membrane. The catalysed reaction is ATP + H2O + 4 H(+)(in) = ADP + phosphate + 5 H(+)(out). Produces ATP from ADP in the presence of a proton gradient across the membrane. The catalytic sites are hosted primarily by the beta subunits. This is ATP synthase subunit beta 1 from Chlorobaculum tepidum (strain ATCC 49652 / DSM 12025 / NBRC 103806 / TLS) (Chlorobium tepidum).